The primary structure comprises 63 residues: Alpha-conotoxin-like PuSG1.1 (63 aa).

A signal peptide spans methionine 1–glycine 21. Residues alanine 22–arginine 43 constitute a propeptide that is removed on maturation. 2 cysteine pairs are disulfide-bonded: cysteine 46-cysteine 52 and cysteine 47-cysteine 60. The segment at proline 48 to proline 50 is lacks the Ser-Xaa-Pro motif that is crucial for potent interaction with nAChR.

It belongs to the conotoxin A superfamily. In terms of tissue distribution, expressed by the salivary gland.

It is found in the secreted. Functionally, alpha-conopeptides-like may act on postsynaptic membranes, they bind to the nicotinic acetylcholine receptors (nAChR) and thus inhibit them. Has possibly a distinct nAChR binding mode from other alpha-conotoxins, due to a different three residue motif (lacks the Ser-Xaa-Pro motif). The sequence is that of Alpha-conotoxin-like PuSG1.1 from Conus pulicarius (Flea-bitten cone).